We begin with the raw amino-acid sequence, 367 residues long: Chorismate synthase (367 aa).

Arg48 is an NADP(+) binding site. Residues 125 to 127, 243 to 244, Gly283, 298 to 302, and Arg324 each bind FMN; these read RSS, NA, and KPTSS.

It belongs to the chorismate synthase family. Homotetramer. FMNH2 is required as a cofactor.

It carries out the reaction 5-O-(1-carboxyvinyl)-3-phosphoshikimate = chorismate + phosphate. The protein operates within metabolic intermediate biosynthesis; chorismate biosynthesis; chorismate from D-erythrose 4-phosphate and phosphoenolpyruvate: step 7/7. In terms of biological role, catalyzes the anti-1,4-elimination of the C-3 phosphate and the C-6 proR hydrogen from 5-enolpyruvylshikimate-3-phosphate (EPSP) to yield chorismate, which is the branch point compound that serves as the starting substrate for the three terminal pathways of aromatic amino acid biosynthesis. This reaction introduces a second double bond into the aromatic ring system. The protein is Chorismate synthase of Psychrobacter sp. (strain PRwf-1).